Consider the following 181-residue polypeptide: Trafficking protein particle complex subunit 3-like protein (181 aa).

Cys68 carries S-palmitoyl cysteine lipidation.

Belongs to the TRAPP small subunits family. BET3 subfamily. As to quaternary structure, homodimer. Component of the multisubunit TRAPP (transport protein particle) complex, which includes at least TRAPPC2, TRAPPC2L, TRAPPC3, TRAPPC3L, TRAPPC4, TRAPPC5, TRAPPC8, TRAPPC9, TRAPPC10, TRAPPC11 and TRAPPC12.

It localises to the golgi apparatus. The protein resides in the cis-Golgi network. It is found in the endoplasmic reticulum. Functionally, may play a role in vesicular transport from endoplasmic reticulum to Golgi. The chain is Trafficking protein particle complex subunit 3-like protein (Trappc3l) from Mus musculus (Mouse).